Here is a 391-residue protein sequence, read N- to C-terminus: Somatostatin receptor type 1 (391 aa).

The tract at residues 1–50 is disordered; the sequence is MFPNGTAPSPTSSPSSSPGGCGEGVCSRGPGSGAADGMEEPGRNSSQNGT. Topologically, residues 1–56 are extracellular; it reads MFPNGTAPSPTSSPSSSPGGCGEGVCSRGPGSGAADGMEEPGRNSSQNGTLSEGQG. Residue asparagine 4 is glycosylated (N-linked (GlcNAc...) asparagine). Residues 8–18 show a composition bias toward low complexity; it reads PSPTSSPSSSP. N-linked (GlcNAc...) asparagine glycosylation is found at asparagine 44 and asparagine 48. The helical transmembrane segment at 57–84 threads the bilayer; it reads SAILISFIYSVVCLVGLCGNSMVIYVIL. Residues 85 to 94 are Cytoplasmic-facing; sequence RYAKMKTATN. Residues 95 to 120 traverse the membrane as a helical segment; that stretch reads IYILNLAIADELLMLSVPFLVTSTLL. Residues 121–131 lie on the Extracellular side of the membrane; sequence RHWPFGALLCR. Cysteine 130 and cysteine 208 form a disulfide bridge. A helical membrane pass occupies residues 132–153; it reads LVLSVDAVNMFTSIYCLTVLSV. The Cytoplasmic portion of the chain corresponds to 154-175; sequence DRYVAVVHPIKAARYRRPTVAK. Residues 176–196 form a helical membrane-spanning segment; the sequence is VVNLGVWVLSLLVILPIVVFS. Topologically, residues 197-219 are extracellular; sequence RTAANSDGTVACNMLMPEPAQRW. The chain crosses the membrane as a helical span at residues 220–244; the sequence is LVGFVLYTFLMGFLLPVGAICLCYV. Topologically, residues 245-270 are cytoplasmic; the sequence is LIIAKMRMVALKAGWQQRKRSERKIT. The helical transmembrane segment at 271–296 threads the bilayer; that stretch reads LMVMMVVMVFVICWMPFYVVQLVNVF. The Extracellular segment spans residues 297–303; the sequence is AEQDDAT. A helical membrane pass occupies residues 304-327; the sequence is VSQLSVILGYANSCANPILYGFLS. Residues 328-391 are Cytoplasmic-facing; the sequence is DNFKRSFQRI…GTCASRISTL (64 aa). Cysteine 339 carries S-palmitoyl cysteine lipidation.

The protein belongs to the G-protein coupled receptor 1 family. As to expression, brain, pituitary, islet, jejunum, stomach, heart, spleen.

It localises to the cell membrane. Receptor for somatostatin with higher affinity for somatostatin-14 than -28. This receptor is coupled to phosphotyrosine phosphatase and Na(+)/H(+) exchanger via pertussis toxin insensitive G proteins. In Rattus norvegicus (Rat), this protein is Somatostatin receptor type 1 (Sstr1).